The sequence spans 295 residues: Ribosomal protein L11 methyltransferase (295 aa).

S-adenosyl-L-methionine is bound by residues Thr-145, Gly-166, Asp-188, and Asn-230.

Belongs to the methyltransferase superfamily. PrmA family.

It is found in the cytoplasm. The enzyme catalyses L-lysyl-[protein] + 3 S-adenosyl-L-methionine = N(6),N(6),N(6)-trimethyl-L-lysyl-[protein] + 3 S-adenosyl-L-homocysteine + 3 H(+). Functionally, methylates ribosomal protein L11. This is Ribosomal protein L11 methyltransferase from Pectobacterium carotovorum subsp. carotovorum (strain PC1).